The chain runs to 349 residues: Glycerol-3-phosphate dehydrogenase [NAD(P)+] (349 aa).

NADPH is bound by residues Ser31, Phe32, Arg52, Lys53, and Lys126. Residues Lys126, Gly154, and Ser156 each coordinate sn-glycerol 3-phosphate. Ala158 contributes to the NADPH binding site. The sn-glycerol 3-phosphate site is built by Lys209, Asp262, Ser272, Arg273, and Asn274. Lys209 serves as the catalytic Proton acceptor. Arg273 contributes to the NADPH binding site. NADPH-binding residues include Val297 and Glu299.

Belongs to the NAD-dependent glycerol-3-phosphate dehydrogenase family.

Its subcellular location is the cytoplasm. The catalysed reaction is sn-glycerol 3-phosphate + NAD(+) = dihydroxyacetone phosphate + NADH + H(+). It carries out the reaction sn-glycerol 3-phosphate + NADP(+) = dihydroxyacetone phosphate + NADPH + H(+). Its pathway is membrane lipid metabolism; glycerophospholipid metabolism. Catalyzes the reduction of the glycolytic intermediate dihydroxyacetone phosphate (DHAP) to sn-glycerol 3-phosphate (G3P), the key precursor for phospholipid synthesis. This is Glycerol-3-phosphate dehydrogenase [NAD(P)+] from Clostridium tetani (strain Massachusetts / E88).